A 160-amino-acid polypeptide reads, in one-letter code: Monooxygenase AacuO (160 aa).

This sequence belongs to the avfA family.

It participates in secondary metabolite biosynthesis. Monooxygenase; part of the gene cluster that mediates the biosynthesis of the tetrahydroxanthone dimer secalonic acid D. The pathway begins with the synthesis of atrochrysone thioester by the polyketide synthase AacuL. The atrochrysone carboxyl ACP thioesterase AacuM then breaks the thioester bond and releases the atrochrysone carboxylic acid from AacuL. Atrochrysone carboxylic acid is decarboxylated by the decarboxylase AacuI, and oxidized by the anthrone oxygenase AacuG to yield emodin. Emodin is then reduced to emodin hydroquinone by a yet unidentified oxidoreductase. A-ring reduction by the short chain dehydrogenase AacuN, dehydration by the scytalone dehydratase-like protein AacuK and probable spontaneous re-oxidation, results in overall deoxygenation to chrysophanol. Baeyer-Villiger oxidation by the Baeyer-Villiger monooxygenase (BVMO) AacuH then yields monodictyphenone. Monodictyphenone is transformed into compounds with the tetrahydroxanthone skeleton via methylesterification by the methyltransferase AacuQ, followed by the action of the flavin-dependent monooxygenase AacuC, the isomerase AacuP, and the short chain dehydrogenase/reductase AacuF or AacuD. AacuF and AacuD should accept the same compound as a substrate but perform the ketoreduction with a different stereoselectivity, thus yielding blennolides B and A, respectively. In the final step of the biosynthesis, the cytochrome P450 monooxygenase AacuE accepts blennolide B and/or blennolide A to conduct the dimerization reaction to furnish the tetrahydroxanthone dimers, secalonic acids D, B, and F. The chain is Monooxygenase AacuO from Aspergillus aculeatus (strain ATCC 16872 / CBS 172.66 / WB 5094).